Here is a 335-residue protein sequence, read N- to C-terminus: Glycerol-3-phosphate dehydrogenase [NAD(P)+] (335 aa).

NADPH is bound by residues serine 10, phenylalanine 11, arginine 31, and lysine 105. 3 residues coordinate sn-glycerol 3-phosphate: lysine 105, glycine 136, and serine 138. An NADPH-binding site is contributed by alanine 140. Residues lysine 191, aspartate 244, serine 254, arginine 255, and asparagine 256 each contribute to the sn-glycerol 3-phosphate site. The active-site Proton acceptor is the lysine 191. Arginine 255 serves as a coordination point for NADPH. Valine 279 and glutamate 281 together coordinate NADPH.

The protein belongs to the NAD-dependent glycerol-3-phosphate dehydrogenase family.

It is found in the cytoplasm. The enzyme catalyses sn-glycerol 3-phosphate + NAD(+) = dihydroxyacetone phosphate + NADH + H(+). The catalysed reaction is sn-glycerol 3-phosphate + NADP(+) = dihydroxyacetone phosphate + NADPH + H(+). It participates in membrane lipid metabolism; glycerophospholipid metabolism. Its function is as follows. Catalyzes the reduction of the glycolytic intermediate dihydroxyacetone phosphate (DHAP) to sn-glycerol 3-phosphate (G3P), the key precursor for phospholipid synthesis. The sequence is that of Glycerol-3-phosphate dehydrogenase [NAD(P)+] from Leptospira borgpetersenii serovar Hardjo-bovis (strain JB197).